The following is a 305-amino-acid chain: Homoserine O-acetyltransferase (305 aa).

The active-site Acyl-thioester intermediate is Cys-142. 2 residues coordinate substrate: Lys-163 and Ser-192. Catalysis depends on His-235, which acts as the Proton acceptor. The active site involves Glu-237. Arg-249 contributes to the substrate binding site.

It belongs to the MetA family.

The protein localises to the cytoplasm. It catalyses the reaction L-homoserine + acetyl-CoA = O-acetyl-L-homoserine + CoA. It functions in the pathway amino-acid biosynthesis; L-methionine biosynthesis via de novo pathway; O-acetyl-L-homoserine from L-homoserine: step 1/1. Transfers an acetyl group from acetyl-CoA to L-homoserine, forming acetyl-L-homoserine. The polypeptide is Homoserine O-acetyltransferase (Phocaeicola vulgatus (strain ATCC 8482 / DSM 1447 / JCM 5826 / CCUG 4940 / NBRC 14291 / NCTC 11154) (Bacteroides vulgatus)).